The primary structure comprises 433 residues: Serine--tRNA ligase (433 aa).

Residue 235 to 237 (TSE) coordinates L-serine. 266–268 (RSE) is a binding site for ATP. Residue glutamate 289 coordinates L-serine. 353–356 (EISS) lines the ATP pocket. Serine 388 lines the L-serine pocket.

The protein belongs to the class-II aminoacyl-tRNA synthetase family. Type-1 seryl-tRNA synthetase subfamily. As to quaternary structure, homodimer. The tRNA molecule binds across the dimer.

It is found in the cytoplasm. The catalysed reaction is tRNA(Ser) + L-serine + ATP = L-seryl-tRNA(Ser) + AMP + diphosphate + H(+). It carries out the reaction tRNA(Sec) + L-serine + ATP = L-seryl-tRNA(Sec) + AMP + diphosphate + H(+). Its pathway is aminoacyl-tRNA biosynthesis; selenocysteinyl-tRNA(Sec) biosynthesis; L-seryl-tRNA(Sec) from L-serine and tRNA(Sec): step 1/1. Catalyzes the attachment of serine to tRNA(Ser). Is also able to aminoacylate tRNA(Sec) with serine, to form the misacylated tRNA L-seryl-tRNA(Sec), which will be further converted into selenocysteinyl-tRNA(Sec). This chain is Serine--tRNA ligase, found in Burkholderia orbicola (strain MC0-3).